Here is an 86-residue protein sequence, read N- to C-terminus: MIKLRLKRFGKKREASYRIVAMNNLSRRDGRPLEELGYYNPRTDEVRLDVPGIVKRLQQGAQPTDTVRRILQKQNVFEQVSAKPAS.

It belongs to the bacterial ribosomal protein bS16 family.

The protein is Small ribosomal subunit protein bS16 of Trichormus variabilis (strain ATCC 29413 / PCC 7937) (Anabaena variabilis).